A 300-amino-acid chain; its full sequence is Formyltetrahydrofolate deformylase (300 aa).

An ACT domain is found at 21-102 (RLLVSCPDQP…MTWSLTLASE (82 aa)). Residue D244 is part of the active site.

It belongs to the PurU family.

The enzyme catalyses (6R)-10-formyltetrahydrofolate + H2O = (6S)-5,6,7,8-tetrahydrofolate + formate + H(+). It participates in purine metabolism; IMP biosynthesis via de novo pathway; formate from 10-formyl-5,6,7,8-tetrahydrofolate: step 1/1. Its function is as follows. Catalyzes the hydrolysis of 10-formyltetrahydrofolate (formyl-FH4) to formate and tetrahydrofolate (FH4). This Bacillus subtilis (strain 168) protein is Formyltetrahydrofolate deformylase.